We begin with the raw amino-acid sequence, 222 residues long: Cysteine protease inhibitor 9 (222 aa).

The signal sequence occupies residues 1–26 (MKSINILSFLLLSSTLSLVAFARSFS). The propeptide occupies 27 to 42 (SENPIVLPSTCHDDDN). Positions 29-34 (NPIVLP) match the Vacuolar targeting signal motif. Cystine bridges form between C84–C136 and C185–C191.

It belongs to the protease inhibitor I3 (leguminous Kunitz-type inhibitor) family. Tuber.

The protein localises to the vacuole. In terms of biological role, putative inhibitor of cysteine proteases. Does not inhibit papain. May protect the plant by inhibiting proteases of invading organisms. This chain is Cysteine protease inhibitor 9, found in Solanum tuberosum (Potato).